A 767-amino-acid polypeptide reads, in one-letter code: Receptor-type tyrosine-protein phosphatase-like ida-1 (767 aa).

The first 19 residues, 1–19, serve as a signal peptide directing secretion; it reads MRFFHSIIVLLFSISTGSA. Over 20 to 398 the chain is Lumenal; the sequence is FLLYGCNLSE…SLPVESSERD (379 aa). N-linked (GlcNAc...) asparagine glycans are attached at residues Asn-26 and Asn-146. A helical membrane pass occupies residues 399-419; sequence WLLMPVLFVCAFTVTALGLVA. The Cytoplasmic portion of the chain corresponds to 420–767; it reads AVQIARSRRH…NHLLKSIATK (348 aa). The 230-residue stretch at 527–756 folds into the Tyrosine-protein phosphatase domain; sequence SQNRTILPFD…KLVYGCVAQE (230 aa).

The protein belongs to the protein-tyrosine phosphatase family. Receptor class 8 subfamily. Proteolytically cleaved probably at a dibasic consensus sequence by egl-3. In hermaphrodites specifically expressed in neurons and in particular in the head nerve ring (ADE, ALA, ASI, ASK, AUA, ASG, AVH and AVJ neurons), in the ventral nerve cord, pre-anal ganglia (PVP neuron), in the tail (PHA, PHB and PHC neurons) and in vulval motor neurons VC and HSN and the vulval uv1 cells. In males, also expressed in neurons anterior to the nerve ring and male-specific neurons in the tail.

Its subcellular location is the cytoplasmic vesicle membrane. It is found in the perikaryon. The protein localises to the cell projection. It localises to the axon. The protein resides in the dendrite. In terms of biological role, regulates dense-core vesicle (DCV) trafficking and/or secretion. Probably by controlling DCV trafficking, plays a role in the AVG neuron-mediated formation of the right axon tract of the ventral nerve cord. Involved in locomotion by regulating acetylcholine release. Probably by controlling the secretion of FLP neuropeptides, regulates the turning step of male mating behavior. Plays a role in preventing dauer formation. This is Receptor-type tyrosine-protein phosphatase-like ida-1 from Caenorhabditis elegans.